Reading from the N-terminus, the 141-residue chain is Large ribosomal subunit protein uL11 (141 aa).

This sequence belongs to the universal ribosomal protein uL11 family. Part of the ribosomal stalk of the 50S ribosomal subunit. Interacts with L10 and the large rRNA to form the base of the stalk. L10 forms an elongated spine to which L12 dimers bind in a sequential fashion forming a multimeric L10(L12)X complex. One or more lysine residues are methylated.

Its function is as follows. Forms part of the ribosomal stalk which helps the ribosome interact with GTP-bound translation factors. The polypeptide is Large ribosomal subunit protein uL11 (Lactobacillus johnsonii (strain CNCM I-12250 / La1 / NCC 533)).